Consider the following 442-residue polypeptide: Chaperone protein dnaJ A6, chloroplastic (442 aa).

The transit peptide at 1–82 (MAIIQLGSTC…PRRGSRFTVR (82 aa)) directs the protein to the chloroplast. Positions 86–150 (DYYSVLGVSK…EKKSLYDRYG (65 aa)) constitute a J domain. A CR-type zinc finger spans residues 211-292 (GMEKEIEISR…CSGDGRVRKT (82 aa)). Zn(2+) contacts are provided by Cys224, Cys227, Cys241, Cys244, Cys267, Cys270, Cys280, and Cys283. CXXCXGXG motif repeat units follow at residues 224 to 231 (CGTCEGSG), 241 to 248 (CTTCGGQG), 267 to 274 (CSSCNGTG), and 280 to 287 (CGTCSGDG).

Belongs to the DnaJ family.

The protein resides in the plastid. The protein localises to the chloroplast. Its function is as follows. May function together with HSC70 chaperone to assist protein folding and prevent protein aggregation during heat stress in the chloroplast. This is Chaperone protein dnaJ A6, chloroplastic from Arabidopsis thaliana (Mouse-ear cress).